The chain runs to 106 residues: Chaperone modulatory protein CbpM (106 aa).

This sequence belongs to the CbpM family.

Its function is as follows. Interacts with CbpA and inhibits both the DnaJ-like co-chaperone activity and the DNA binding activity of CbpA. Together with CbpA, modulates the activity of the DnaK chaperone system. Does not inhibit the co-chaperone activity of DnaJ. The protein is Chaperone modulatory protein CbpM of Coxiella burnetii (strain CbuK_Q154) (Coxiella burnetii (strain Q154)).